A 289-amino-acid polypeptide reads, in one-letter code: Ferri-bacillibactin esterase BesA (289 aa).

Catalysis depends on charge relay system residues Ser163, Glu225, and His263.

Belongs to the esterase D family.

Its subcellular location is the cytoplasm. In terms of biological role, catalyzes the hydrolysis of the trilactone cycle of ferri-bacillibactin (ferri-BB) complex, leading to the formation of bacillibactin monomers and to cytosolic iron release, thus making iron available for metabolic use. Can also hydrolyze bacillibactin (BB), however the catalytic efficiency for ferri-BB hydrolysis is much higher than for BB. The chain is Ferri-bacillibactin esterase BesA (besA) from Bacillus subtilis (strain 168).